Consider the following 143-residue polypeptide: Transcriptional regulator MraZ (143 aa).

2 consecutive SpoVT-AbrB domains span residues 5 to 47 (EYQH…PMHE) and 76 to 119 (ATEC…SKVI).

This sequence belongs to the MraZ family. As to quaternary structure, forms oligomers.

It is found in the cytoplasm. Its subcellular location is the nucleoid. The chain is Transcriptional regulator MraZ from Bacillus subtilis (strain 168).